An 887-amino-acid chain; its full sequence is Tubulin polyglutamylase TTLL7 (887 aa).

The interval 1–21 is disordered; sequence MPSLPQEGVIQGPSPLDLNTE. The TTL domain maps to 38–390; it reads KGTITANVAG…RTSDKRRNLA (353 aa). ATP is bound by residues Lys-160, 166 to 167, 188 to 191, and 201 to 203; these read MG, QEYI, and KFD. Position 227 (Arg-227) interacts with L-glutamate. 249 to 250 contacts ATP; it reads TN. Residues Tyr-251, Ser-252, and Lys-271 each contribute to the L-glutamate site. Mg(2+) contacts are provided by Asp-336, Glu-349, and Asn-351. Lys-367 serves as a coordination point for L-glutamate. The tract at residues 388–450 is c-MTBD region; sequence NLAKQKAEAQ…ISREEHENRH (63 aa). Disordered stretches follow at residues 519-621 and 651-676; these read MGKT…TRPF and LPHS…TKEQ. Low complexity predominate over residues 548–560; it reads SSDSSYDSSSSSS. Composition is skewed to polar residues over residues 593–621 and 656–670; these read QQPS…TRPF and DACS…SLRQ.

The protein belongs to the tubulin--tyrosine ligase family. In terms of assembly, interacts with both alpha- and beta-tubulin (via C-terminal tubulin tails). The cofactor is Mg(2+). Highly expressed in the nervous system including spinal cord, thalamus, hippocampus, hypothalamus and cerebellum.

The protein localises to the cell projection. Its subcellular location is the cilium. It localises to the cytoplasm. The protein resides in the cytoskeleton. It is found in the cilium basal body. The protein localises to the dendrite. Its subcellular location is the perikaryon. The catalysed reaction is L-glutamyl-[protein] + L-glutamate + ATP = gamma-L-glutamyl-L-glutamyl-[protein] + ADP + phosphate + H(+). It catalyses the reaction (L-glutamyl)(n)-gamma-L-glutamyl-L-glutamyl-[protein] + L-glutamate + ATP = (L-glutamyl)(n+1)-gamma-L-glutamyl-L-glutamyl-[protein] + ADP + phosphate + H(+). Functionally, polyglutamylase which modifies tubulin, generating polyglutamate side chains of variable lengths on the gamma-carboxyl group of specific glutamate residues within the C-terminal tail of tubulin. Mediates both ATP-dependent initiation and elongation steps of the polyglutamylation reaction. Preferentially modifies the beta-tubulin tail over an alpha-tail. Competes with monoglycylase TTLL3 for modification site on beta-tubulin substrate, thereby creating an anticorrelation between glycylation and glutamylation reactions. Required for neurite growth; responsible for the strong increase in tubulin polyglutamylation during postnatal neuronal maturation. The chain is Tubulin polyglutamylase TTLL7 from Homo sapiens (Human).